The chain runs to 611 residues: Elongation factor 4 (611 aa).

The tr-type G domain occupies 11 to 193 (KHIRNFSIVA…KIVKDVPAPT (183 aa)). GTP-binding positions include 23–28 (DHGKST) and 140–143 (NKID).

Belongs to the TRAFAC class translation factor GTPase superfamily. Classic translation factor GTPase family. LepA subfamily.

Its subcellular location is the cell membrane. The catalysed reaction is GTP + H2O = GDP + phosphate + H(+). Its function is as follows. Required for accurate and efficient protein synthesis under certain stress conditions. May act as a fidelity factor of the translation reaction, by catalyzing a one-codon backward translocation of tRNAs on improperly translocated ribosomes. Back-translocation proceeds from a post-translocation (POST) complex to a pre-translocation (PRE) complex, thus giving elongation factor G a second chance to translocate the tRNAs correctly. Binds to ribosomes in a GTP-dependent manner. This chain is Elongation factor 4, found in Limosilactobacillus reuteri (strain DSM 20016) (Lactobacillus reuteri).